Here is a 250-residue protein sequence, read N- to C-terminus: 2,3-bisphosphoglycerate-dependent phosphoglycerate mutase (250 aa).

Residues 10-17 (RHGESQWN), 23-24 (TG), Arg-62, 89-92 (ERHY), Lys-100, 116-117 (RR), and 185-186 (GN) contribute to the substrate site. His-11 acts as the Tele-phosphohistidine intermediate in catalysis. Catalysis depends on Glu-89, which acts as the Proton donor/acceptor.

It belongs to the phosphoglycerate mutase family. BPG-dependent PGAM subfamily. As to quaternary structure, homodimer.

It catalyses the reaction (2R)-2-phosphoglycerate = (2R)-3-phosphoglycerate. It participates in carbohydrate degradation; glycolysis; pyruvate from D-glyceraldehyde 3-phosphate: step 3/5. Functionally, catalyzes the interconversion of 2-phosphoglycerate and 3-phosphoglycerate. The protein is 2,3-bisphosphoglycerate-dependent phosphoglycerate mutase of Sodalis glossinidius (strain morsitans).